The sequence spans 452 residues: Tubulin beta-2 chain (452 aa).

GTP is bound by residues glutamine 11, glutamate 72, serine 141, glycine 145, threonine 146, glycine 147, asparagine 207, and asparagine 229. Glutamate 72 lines the Mg(2+) pocket. Positions 414 to 452 are disordered; sequence AESNMNDPVAEYQQYQDATADDEEEYDDEAADDHHQYES. Over residues 432–444 the composition is skewed to acidic residues; it reads TADDEEEYDDEAA.

Belongs to the tubulin family. In terms of assembly, dimer of alpha and beta chains. A typical microtubule is a hollow water-filled tube with an outer diameter of 25 nm and an inner diameter of 15 nM. Alpha-beta heterodimers associate head-to-tail to form protofilaments running lengthwise along the microtubule wall with the beta-tubulin subunit facing the microtubule plus end conferring a structural polarity. Microtubules usually have 13 protofilaments but different protofilament numbers can be found in some organisms and specialized cells. Requires Mg(2+) as cofactor.

It localises to the cytoplasm. The protein resides in the cytoskeleton. Functionally, tubulin is the major constituent of microtubules, a cylinder consisting of laterally associated linear protofilaments composed of alpha- and beta-tubulin heterodimers. Microtubules grow by the addition of GTP-tubulin dimers to the microtubule end, where a stabilizing cap forms. Below the cap, tubulin dimers are in GDP-bound state, owing to GTPase activity of alpha-tubulin. This chain is Tubulin beta-2 chain (TUBB2), found in Solanum tuberosum (Potato).